The chain runs to 387 residues: Cystathionine gamma-lyase (387 aa).

Positions 53, 105, and 110 each coordinate substrate. Position 202 is an N6-(pyridoxal phosphate)lysine (Lys202). Glu329 is a substrate binding site.

The protein belongs to the trans-sulfuration enzymes family. As to quaternary structure, homotetramer. Interacts with CALM in a calcium-dependent manner. The cofactor is pyridoxal 5'-phosphate.

The protein resides in the cytoplasm. It carries out the reaction L,L-cystathionine + H2O = 2-oxobutanoate + L-cysteine + NH4(+). The enzyme catalyses L-cysteine + H2O = hydrogen sulfide + pyruvate + NH4(+) + H(+). The catalysed reaction is L-homocysteine + H2O = 2-oxobutanoate + hydrogen sulfide + NH4(+) + H(+). It catalyses the reaction L-homoserine = 2-oxobutanoate + NH4(+). It functions in the pathway amino-acid biosynthesis; L-cysteine biosynthesis; L-cysteine from L-homocysteine and L-serine: step 2/2. Catalyzes the last step in the trans-sulfuration pathway from L-methionine to L-cysteine in a pyridoxal-5'-phosphate (PLP)-dependent manner, which consists on cleaving the L,L-cystathionine molecule into L-cysteine, ammonia and 2-oxobutanoate. Part of the L-cysteine derived from the trans-sulfuration pathway is utilized for biosynthesis of the ubiquitous antioxidant glutathione. Besides its role in the conversion of L-cystathionine into L-cysteine, it utilizes L-cysteine and L-homocysteine as substrates (at much lower rates than L,L-cystathionine) to produce the endogenous gaseous signaling molecule hydrogen sulfide (H2S). The chain is Cystathionine gamma-lyase (cysA) from Dictyostelium discoideum (Social amoeba).